A 167-amino-acid chain; its full sequence is uncharacterized protein (167 aa).

Helical transmembrane passes span 96–115 and 119–138; these read YVPA…FNFY and WGAL…IIAV.

Its subcellular location is the cell membrane. This is an uncharacterized protein from Bacillus subtilis (strain 168).